We begin with the raw amino-acid sequence, 314 residues long: WD repeat domain-containing protein 83 (314 aa).

7 WD repeats span residues 23-62 (CNQGAVRAVRFNVDGNYCMTCGSDKSLKLWNPHKGSLLKT), 65-104 (GHGYEVLDTAGSCDNSQLCSCSSDKTVILWDVAQGQVVRK), 107-146 (GHAGKVNCVQFNEEATVIISGSIDSSIRCWDCRSRRPDAI), 151-188 (EAKDGISSVKVSAHEILAGSVDGNLRRYDLRKGEMCAD), 189-228 (YLGSPITCVSFSQDSQCLLASSLDSTLRLLDKDTGELLGE), 231-272 (GHQN…LVLK), and 275-313 (VGKAVVQSLSFHPTECCLLTASEGGVQVWRGASYEEEGG).

This sequence belongs to the WD repeat MORG1 family.

It is found in the cytoplasm. Its function is as follows. Molecular scaffold protein for various multimeric protein complexes. Acts as a module in the assembly of a multicomponent scaffold for the ERK pathway, linking ERK responses to specific agonists. Also involved in response to hypoxia by acting as a negative regulator of HIF1A/HIF-1-alpha. The polypeptide is WD repeat domain-containing protein 83 (wdr83) (Xenopus laevis (African clawed frog)).